Here is a 188-residue protein sequence, read N- to C-terminus: dCTP deaminase (188 aa).

Residues 111 to 116, 135 to 137, glutamine 156, tyrosine 170, and glutamine 180 contribute to the dCTP site; these read KSTYAR and TLE. Glutamate 137 functions as the Proton donor/acceptor in the catalytic mechanism.

It belongs to the dCTP deaminase family. Homotrimer.

It catalyses the reaction dCTP + H2O + H(+) = dUTP + NH4(+). It participates in pyrimidine metabolism; dUMP biosynthesis; dUMP from dCTP (dUTP route): step 1/2. In terms of biological role, catalyzes the deamination of dCTP to dUTP. The protein is dCTP deaminase of Pseudomonas syringae pv. tomato (strain ATCC BAA-871 / DC3000).